The chain runs to 303 residues: NAD kinase (303 aa).

Asp85 (proton acceptor) is an active-site residue. NAD(+)-binding positions include 85–86 (DG), 159–160 (ND), Arg187, Asp189, 200–205 (TAYALS), Ala224, and Gln258.

This sequence belongs to the NAD kinase family. A divalent metal cation is required as a cofactor.

The protein localises to the cytoplasm. It catalyses the reaction NAD(+) + ATP = ADP + NADP(+) + H(+). Involved in the regulation of the intracellular balance of NAD and NADP, and is a key enzyme in the biosynthesis of NADP. Catalyzes specifically the phosphorylation on 2'-hydroxyl of the adenosine moiety of NAD to yield NADP. This Variovorax paradoxus (strain S110) protein is NAD kinase.